A 70-amino-acid chain; its full sequence is Small ribosomal subunit protein bS18 (70 aa).

This sequence belongs to the bacterial ribosomal protein bS18 family. Part of the 30S ribosomal subunit. Forms a tight heterodimer with protein bS6.

In terms of biological role, binds as a heterodimer with protein bS6 to the central domain of the 16S rRNA, where it helps stabilize the platform of the 30S subunit. The polypeptide is Small ribosomal subunit protein bS18 (Salinibacter ruber (strain DSM 13855 / M31)).